Consider the following 81-residue polypeptide: Putative defensin-like protein 148 (81 aa).

Positions M1–G24 are cleaved as a signal peptide. 4 disulfides stabilise this stretch: C34–C80, C43–C63, C48–C74, and C52–C76.

It belongs to the DEFL family.

The protein localises to the secreted. The sequence is that of Putative defensin-like protein 148 (LCR4) from Arabidopsis thaliana (Mouse-ear cress).